A 27-amino-acid polypeptide reads, in one-letter code: Caerulein precursor fragment R7 (27 aa).

As to expression, expressed by the skin glands.

Its subcellular location is the secreted. Its function is as follows. Antimicrobial peptide. The protein is Caerulein precursor fragment R7 of Xenopus ruwenzoriensis (Uganda clawed frog).